Consider the following 117-residue polypeptide: Structural toxin peptide sea anemone type 9a (117 aa).

Residues 1 to 23 form the signal peptide; sequence MKTIIAIFSLAAMIVLVRPTPLE. 3 tandem repeats follow at residues 28-56, 57-88, and 89-117. The interval 29 to 117 is 3 X approximate tandem repeats; the sequence is RSIINVPCKK…GKCRKIHGCS (89 aa).

In terms of processing, contains 6 disulfide bonds. In terms of tissue distribution, expressed outside of acontia.

It is found in the secreted. Its subcellular location is the nematocyst. Putative neurotoxin. The sequence is that of Structural toxin peptide sea anemone type 9a from Calliactis polypus (Hermit crab anemone).